The following is a 400-amino-acid chain: Na(+)/H(+) antiporter NhaA (400 aa).

The next 12 membrane-spanning stretches (helical) occupy residues 26–46 (AGGILLLFSAVVAMLLANSPL), 71–91 (LIHWINDGFMAVFFVLVGMEV), 107–127 (IFPAIAAIGGMVIPAVVYWFI), 137–157 (GWAIPMATDIAFALGIMALLS), 166–186 (IFLLALAIIDDLGAIVVIALF), 189–209 (HGLSVQALIFSAVAIIVLILL), 212–232 (FKVSALCAYMVVGAILWASVL), 233–253 (KSGVHATLAGVIIGFSIPLKG), 273–293 (FVILPLFAFANAGVSFAGIDV), 299–319 (PLLLAIASGLIIGKPVGIFGF), 340–360 (IFAVAVLCGIGFTMSMFLASL), and 373–393 (LSRLGILLGSTVSAILGYLFL).

It belongs to the NhaA Na(+)/H(+) (TC 2.A.33) antiporter family.

Its subcellular location is the cell inner membrane. It carries out the reaction Na(+)(in) + 2 H(+)(out) = Na(+)(out) + 2 H(+)(in). Its function is as follows. Na(+)/H(+) antiporter that extrudes sodium in exchange for external protons. The polypeptide is Na(+)/H(+) antiporter NhaA (Haemophilus influenzae (strain 86-028NP)).